Here is a 2542-residue protein sequence, read N- to C-terminus: MLTDSGGGGTSFEEDLDSVAPRSAPAGASEPPPPGGVGLGIRTVRLFGEAGPASGVGSSGGGGSGSGTGGGDAALDFKLAAAVLRTGGGGGASGSDEDEVSEVESFILDQEDLDNPVLKTTSEIFLSSTAEGADLRTVDPETQARLEALLEAAGIGKLSTADGKAFADPEVLRRLTSSVSCALDEAAAALTRMKAENSHNAGQVDTRSLAEACSDGDVNAVRKLLDEGRSVNEHTEEGESLLCLACSAGYYELAQVLLAMHANVEDRGNKGDITPLMAASSGGYLDIVKLLLLHDADVNSQSATGNTALTYACAGGFVDIVKVLLNEGANIEDHNENGHTPLMEAASAGHVEVARVLLDHGAGINTHSNEFKESALTLACYKGHLDMVRFLLEAGADQEHKTDEMHTALMEACMDGHVEVARLLLDSGAQVNMPADSFESPLTLAACGGHVELAALLIERGANLEEVNDEGYTPLMEAAREGHEEMVALLLAQGANINAQTEETQETALTLACCGGFSEVADFLIKAGADIELGCSTPLMEASQEGHLELVKYLLASGANVHATTATGDTALTYACENGHTDVADVLLQAGADLEHESEGGRTPLMKAARAGHLCTVQFLISKGANVNRATANNDHTVVSLACAGGHLAVVELLLAHGADPTHRLKDGSTMLIEAAKGGHTNVVSYLLDYPNNVLSVPTTDVSQLPPPSQDQSQVPRVPTHTLAMVVPPQEPDRTSQENSPALLGVQKGTSKQKSSSLQVADQDLLPSFHPYQPLECIVEETEGKLNELGQRISAIEKAQLKSLELIQGEPLNKDKIEELKKNREEQVQKKKKILKELQKVERQLQMKTQQQFTKEYLETKGQKDTVSLHQQCSHRGVFPEGEGDGSLPEDHFSELPQVDTILFKDNDVDDEQQSPPSAEQIDFVPVQPLSSPQCNFSSDLGSNGTNSLELQKVSGNQQIVGQPQIAITGHDQGLLVQEPDGLMVATPAQTLTDTLDDLIAAVSTRVPTGSNSSSQTTECLTPESCSQTTSNVASQSMPPVYPSVDIDAHTESNHDTALTLACAGGHEELVSVLIARDAKIEHRDKKGFTPLILAATAGHVGVVEILLDKGGDIEAQSERTKDTPLSLACSGGRQEVVDLLLARGANKEHRNVSDYTPLSLAASGGYVNIIKILLNAGAEINSRTGSKLGISPLMLAAMNGHVPAVKLLLDMGSDINAQIETNRNTALTLACFQGRAEVVSLLLDRKANVEHRAKTGLTPLMEAASGGYAEVGRVLLDKGADVNAPPVPSSRDTALTIAADKGHYKFCELLIHRGAHIDVRNKKGNTPLWLASNGGHFDVVQLLVQAGADVDAADNRKITPLMSAFRKGHVKVVQYLVKEVNQFPSDIECMRYIATITDKELLKKCHQCVETIVKAKDQQAAEANKNASILLKELDLEKSREESRKQALAAKREKRKEKRKKKKEEQKRKQEEDEENKPKENSELPEDEDEEENDEDVEQEVPIEPPSATTTTTIGISATSATFTNVFGKKRANVVTTPSTNRKNKKNKTKETPPTAHLILPEQHMSLAQQKADKNKINGEPRGGGAGGNSDSDNLDSTDCNSESSSGGKSQELNFVMDVNSSKYPSLLLHSQEEKTSTATSKTQTRLEGEVTPNSLSTSYKTVSLPLSSPNIKLNLTSPKRGQKREEGWKEVVRRSKKLSVPASVVSRIMGRGGCNITAIQDVTGAHIDVDKQKDKNGERMITIRGGTESTRYAVQLINALIQDPAKELEDLIPKNHIRTPASTKSIHANFSSGVGTTAASSKNAFPLGAPTLVTSQATTLSTFQPANKLNKNVPTNVRSSFPVSLPLAYPHPHFALLAAQTMQQIRHPRLPMAQFGGTFSPSPNTWGPFPVRPVNPGNTNSSPKHNNTSRLPNQNGTVLPSESAGLATASCPITVSSVVAASQQLCVTNTRTPSSVRKQLFACVPKTSPPATVISSVTSTCSSLPSVSSAPITSGQAPTTFLPASTSQAQLSSQKMESFSAVPPTKEKVSTQDQPMANLCTPSSTANSCSSSASNTPGAPETHPSSSPTPTSSNTQEEAQPSSVSDLSPMSMPFASNSEPAPLTLTSPRMVAADNQDTSNLPQLAVPAPRVSHRMQPRGSFYSMVPNATIHQDPQSIFVTNPVTLTPPQGPPAAVQLSSAVNIMNGSQMHINPANKSLPPTFGPATLFNHFSSLFDSSQVPANQGWGDGPLSSRVATDASFTVQSAFLGNSVLGHLENMHPDNSKAPGFRPPSQRVSTSPVGLPSIDPSGSSPSSSSAPLASFSGIPGTRVFLQGPAPVGTPSFNRQHFSPHPWTSASNSSTSAPPTLGQPKGVSASQDRKIPPPIGTERLARIRQGGSVAQAPAGTSFVAPVGHSGIWSFGVNAVSEGLSGWSQSVMGNHPMHQQLSDPSTFSQHQPMERDDSGMVAPSNIFHQPMASGFVDFSKGLPISMYGGTIIPSHPQLADVPGGPLFNGLHNPDPAWNPMIKVIQNSTECTDAQQIWPGTWAPHIGNMHLKYVN.

The residue at position 1 (M1) is an N-acetylmethionine. The span at 1–10 (MLTDSGGGGT) shows a compositional bias: gly residues. Disordered stretches follow at residues 1 to 44 (MLTD…IRTV) and 50 to 69 (AGPA…SGTG). Low complexity predominate over residues 20–29 (APRSAPAGAS). Residues 57-69 (GSSGGGGSGSGTG) show a composition bias toward gly residues. S101 and S105 each carry phosphoserine. ANK repeat units lie at residues 204–233 (VDTR…SVNE), 237–266 (EGES…NVED), 271–300 (GDIT…DVNS), 304–333 (TGNT…NIED), 337–366 (NGHT…GINT), 371–400 (FKES…DQEH), 404–433 (EMHT…QVNM), 437–466 (SFES…NLEE), 470–499 (EGYT…NINA), 504–533 (TQET…DIEL), 534–563 (GCST…NVHA), 567–596 (TGDT…DLEH), 600–629 (GGRT…NVNR), 634–663 (NDHT…DPTH), and 667–696 (DGST…NVLS). A coiled-coil region spans residues 775-852 (LECIVEETEG…RQLQMKTQQQ (78 aa)). S803 carries the phosphoserine modification. 10 ANK repeats span residues 1054–1083 (NHDT…KIEH), 1087–1116 (KGFT…DIEA), 1121–1150 (TKDT…NKEH), 1154–1183 (SDYT…EINS), 1189–1218 (LGIS…DINA), 1223–1252 (NRNT…NVEH), 1256–1285 (TGLT…DVNA), 1291–1320 (SRDT…HIDV), 1324–1353 (KGNT…DVDA), and 1357–1386 (RKIT…QFPS). Residues 1415–1485 (KAKDQQAAEA…ENKPKENSEL (71 aa)) adopt a coiled-coil conformation. Disordered stretches follow at residues 1441 to 1517 (REES…TIGI), 1534 to 1614 (NVVT…SQEL), and 1632 to 1664 (SQEE…YKTV). The segment covering 1453-1463 (REKRKEKRKKK) has biased composition (basic residues). The span at 1464–1483 (KEEQKRKQEEDEENKPKENS) shows a compositional bias: basic and acidic residues. Positions 1484–1502 (ELPEDEDEEENDEDVEQEV) are enriched in acidic residues. Over residues 1503–1517 (PIEPPSATTTTTIGI) the composition is skewed to low complexity. S1540 carries the post-translational modification Phosphoserine. Position 1553 is a phosphothreonine (T1553). The span at 1590-1603 (NSDSDNLDSTDCNS) shows a compositional bias: low complexity. Residues 1604–1614 (ESSSGGKSQEL) are compositionally biased toward polar residues. Phosphoserine is present on S1632. The segment covering 1638–1664 (STATSKTQTRLEGEVTPNSLSTSYKTV) has biased composition (polar residues). A Phosphothreonine modification is found at T1653. In terms of domain architecture, KH spans 1695 to 1759 (RRSKKLSVPA…ESTRYAVQLI (65 aa)). Disordered regions lie at residues 1886-1923 (NTWG…VLPS), 1987-2106 (PSVS…APLT), and 2260-2367 (NMHP…IPPP). Residues 1898 to 1922 (PGNTNSSPKHNNTSRLPNQNGTVLP) are compositionally biased toward polar residues. Over residues 1987–1996 (PSVSSAPITS) the composition is skewed to low complexity. Residues 1997–2019 (GQAPTTFLPASTSQAQLSSQKME) are compositionally biased toward polar residues. The span at 2042–2077 (CTPSSTANSCSSSASNTPGAPETHPSSSPTPTSSNT) shows a compositional bias: low complexity. The span at 2078 to 2106 (QEEAQPSSVSDLSPMSMPFASNSEPAPLT) shows a compositional bias: polar residues. Composition is skewed to low complexity over residues 2285-2308 (LPSI…FSGI) and 2337-2349 (TSAS…APPT).

It belongs to the mask family. As to quaternary structure, interacts with PTPN11. Isoform 2 interacts with HIV-1 VPR. Interacts with NOD2. Ubiquitous with high expression in cervix, spleen and brain. Expressed in hematopoietic cells with increased expression in leukemia cells. Isoform 2 is highly expressed in spleen with almost no expression in muscle and brain.

The protein resides in the cytoplasm. Functionally, may play a role as a scaffolding protein that may be associated with the abnormal phenotype of leukemia cells. Isoform 2 may possess an antiapoptotic effect and protect cells during normal cell survival through its regulation of caspases. This is Ankyrin repeat and KH domain-containing protein 1 (ANKHD1) from Homo sapiens (Human).